Consider the following 388-residue polypeptide: Na(+)/H(+) antiporter NhaA (388 aa).

A run of 11 helical transmembrane segments spans residues 14–34 (GGII…MGAT), 59–79 (MLLW…GLEV), 95–115 (VFPV…YLAF), 125–145 (GWAI…ALLG), 154–174 (IFLM…IALF), 179–199 (LSIV…LLNL), 219–239 (VLKS…FIPL), 254–274 (ILHP…NAGV), 292–312 (IIAG…WLAL), 328–348 (IMAV…IASL), and 356–376 (ALIN…AVVG).

The protein belongs to the NhaA Na(+)/H(+) (TC 2.A.33) antiporter family.

The protein resides in the cell inner membrane. It catalyses the reaction Na(+)(in) + 2 H(+)(out) = Na(+)(out) + 2 H(+)(in). Functionally, na(+)/H(+) antiporter that extrudes sodium in exchange for external protons. In Salmonella arizonae (strain ATCC BAA-731 / CDC346-86 / RSK2980), this protein is Na(+)/H(+) antiporter NhaA.